The primary structure comprises 152 residues: Urease accessory protein UreE (152 aa).

The protein belongs to the UreE family.

It localises to the cytoplasm. Its function is as follows. Involved in urease metallocenter assembly. Binds nickel. Probably functions as a nickel donor during metallocenter assembly. This Citrobacter koseri (strain ATCC BAA-895 / CDC 4225-83 / SGSC4696) protein is Urease accessory protein UreE.